The following is a 751-amino-acid chain: Diamine oxidase [copper-containing] (751 aa).

Residues 1 to 22 (MSLAFGWAAVILLLQTADTASA) form the signal peptide. Asn61 and Asn110 each carry an N-linked (GlcNAc...) asparagine glycan. The Proton acceptor role is filled by Asp373. A disulfide bond links Cys391 and Cys417. Tyr461 serves as the catalytic Schiff-base intermediate with substrate; via topaquinone. The residue at position 461 (Tyr461) is a 2',4',5'-topaquinone. Positions 510 and 512 each coordinate Cu(2+). Ca(2+) is bound by residues Asp519, Leu520, and Asp521. N-linked (GlcNAc...) asparagine glycosylation is present at Asn538. The Ca(2+) site is built by Glu562, Phe653, Asn656, Glu658, Asp664, and Leu665. Cu(2+) is bound at residue His675. A glycan (N-linked (GlcNAc...) asparagine) is linked at Asn745.

It belongs to the copper/topaquinone oxidase family. In terms of assembly, homodimer; disulfide-linked. Cu(2+) is required as a cofactor. It depends on Ca(2+) as a cofactor. Requires L-topaquinone as cofactor. Topaquinone (TPQ) is generated by copper-dependent autoxidation of a specific tyrosyl residue. In terms of processing, N-glycosylated.

It localises to the secreted. The protein resides in the extracellular space. Its subcellular location is the cell membrane. The catalysed reaction is histamine + O2 + H2O = imidazole-4-acetaldehyde + H2O2 + NH4(+). The enzyme catalyses N(tau)-methylhistamine + O2 + H2O = 1-methylimidazole-4-acetaldehyde + H2O2 + NH4(+). It catalyses the reaction putrescine + O2 + H2O = 4-aminobutanal + H2O2 + NH4(+). It carries out the reaction cadaverine + O2 + H2O = 5-aminopentanal + H2O2 + NH4(+). With respect to regulation, inhibited by amiloride and amiloride analogs. Functionally, catalyzes the oxidative deamination of primary amines to the corresponding aldehydes with the concomitant production of hydrogen peroxide and ammonia. Its preferred substrates in vitro are the diamines histamine and 1-methylhistamine and it could therefore play a role in allergic and immune responses. Has a broad specificity for diamines and can also act on cadaverine and putrescine, two products of amino acid catabolism. It could also act on polyamines, like spermidine and spermine though less efficiently, and regulate various biological processes. The protein is Diamine oxidase [copper-containing] of Mus musculus (Mouse).